Here is a 144-residue protein sequence, read N- to C-terminus: Ig heavy chain V region MOPC 141 (144 aa).

A signal peptide spans 1-19; sequence MAVLALLFCLATFPSCILS. Residues 20 to 130 form the Ig-like domain; that stretch reads QVQLKESGPG…YYGRSDKYFT (111 aa).

This chain is Ig heavy chain V region MOPC 141, found in Mus musculus (Mouse).